The sequence spans 600 residues: Pyranose dehydrogenase 3 (600 aa).

The first 25 residues, 1–25 (MLPRVARLNTHLVSLALLGFQITYG), serve as a signal peptide directing secretion. N-linked (GlcNAc...) asparagine glycans are attached at residues Asn-99 and Asn-114. His-127 is subject to Tele-8alpha-FAD histidine. 6 N-linked (GlcNAc...) asparagine glycosylation sites follow: Asn-173, Asn-199, Asn-275, Asn-342, Asn-399, and Asn-507. The active-site Proton acceptor is the His-535. N-linked (GlcNAc...) asparagine glycosylation is present at Asn-546. Residue His-579 is part of the active site.

The protein belongs to the GMC oxidoreductase family. Monomer. It depends on FAD as a cofactor. In terms of processing, N-glycosylated.

The protein resides in the secreted. It carries out the reaction pyranose + acceptor = pyranos-2-ulose + reduced acceptor.. The catalysed reaction is pyranose + acceptor = pyranos-3-ulose + reduced acceptor.. It catalyses the reaction pyranose + acceptor = pyranos-2,3-diulose + reduced acceptor.. The enzyme catalyses a pyranoside + acceptor = a pyranosid-3-ulose + reduced acceptor.. It carries out the reaction a pyranoside + acceptor = a pyranosid-3,4-diulose + reduced acceptor.. Its function is as follows. Catalyzes the single-oxidation or sequential double oxidation reaction of carbohydrates primarily at carbon-2 and/or carbon-3 with the concomitant reduction of the flavin. The enzyme exhibits a broad sugar substrate specificity, oxidizing different aldopyranoses to the corresponding C-1, C-2, C-3 or C-1,2, C-2,3 and C-3,4 (di)dehydro sugars with substrate-specific regioselectivity. Accepts only a narrow range of electron acceptors such as substituted benzoquinones and complexed metal ions and reacts extremely slowly with O(2) as acceptor. May play a role in the natural recycling of plant matter by oxidizing all major monosaccharides in lignocellulose and by reducing quinone compounds or reactive radical species generated during lignin depolymerization. In Leucoagaricus meleagris (Western flat-topped agaric), this protein is Pyranose dehydrogenase 3.